The following is a 222-amino-acid chain: Lipid A 4'-phosphatase (222 aa).

Topologically, residues 1-3 (MAR) are cytoplasmic. Residues 4 to 24 (FHIILGLVVCFFAWIFFLIFP) form a helical membrane-spanning segment. At 25–58 (NLDIQFAGHFYNSSAHQFIGGYDGFLGFLHWFAR) the chain is on the periplasmic side. The chain crosses the membrane as a helical span at residues 59-79 (FFPIFFSIIVILFLLGSLFID). At 80-87 (KFKIKYRK) the chain is on the cytoplasmic side. The helical transmembrane segment at 88 to 108 (AIFFIAVCLWIGPGLVVNYVF) threads the bilayer. At 109–144 (KDHWGRPRPVMVEQFNGDKIFQPPFVISSQCDKNCS) the chain is on the periplasmic side. Residues 145–165 (FVCGDASMGFWLFAFMPLLAT) form a helical membrane-spanning segment. The Cytoplasmic portion of the chain corresponds to 166 to 169 (RKKK). Residues 170-190 (LVAFIAAVVAGGGLGLMRMSQ) traverse the membrane as a helical segment. Topologically, residues 191–193 (GGH) are periplasmic. The helical transmembrane segment at 194-214 (FFSDVVFCGIFVYISTWVVYA) threads the bilayer. Topologically, residues 215-222 (LMYRKKEY) are cytoplasmic.

This sequence belongs to the lipid A LpxF 4'-phosphatase family.

The protein localises to the cell inner membrane. It participates in bacterial outer membrane biogenesis; LPS lipid A biosynthesis. Functionally, removes the 4'-phosphate moiety from lipid IV(A) (a tetraacylated precursor of lipid A) and from pentaacylated lipid A, but not from hexaacylated lipid A (as is found in E.coli). Does not dephosphorylate phosphatidic acid, phosphatidylglycerophosphate, or the 1-phosphate group of lipid A and lipid A precursors. Its expression in E.coli confers resistance to the cationic antimicrobial peptide (CAMP) polymyxin B. Plays a critical role in the ability of the bacteria to avoid the host's innate immune system, especially the bactericidal action of CAMPs, although whether it is CAMP-sensitivity or increased sensitivity to the immune system is not clear. This is Lipid A 4'-phosphatase from Francisella tularensis subsp. novicida (strain U112).